We begin with the raw amino-acid sequence, 149 residues long: D-aminoacyl-tRNA deacylase (149 aa).

Positions 137-138 (GP) match the Gly-cisPro motif, important for rejection of L-amino acids motif.

The protein belongs to the DTD family. As to quaternary structure, homodimer.

Its subcellular location is the cytoplasm. The enzyme catalyses glycyl-tRNA(Ala) + H2O = tRNA(Ala) + glycine + H(+). The catalysed reaction is a D-aminoacyl-tRNA + H2O = a tRNA + a D-alpha-amino acid + H(+). An aminoacyl-tRNA editing enzyme that deacylates mischarged D-aminoacyl-tRNAs. Also deacylates mischarged glycyl-tRNA(Ala), protecting cells against glycine mischarging by AlaRS. Acts via tRNA-based rather than protein-based catalysis; rejects L-amino acids rather than detecting D-amino acids in the active site. By recycling D-aminoacyl-tRNA to D-amino acids and free tRNA molecules, this enzyme counteracts the toxicity associated with the formation of D-aminoacyl-tRNA entities in vivo and helps enforce protein L-homochirality. This Desulfotalea psychrophila (strain LSv54 / DSM 12343) protein is D-aminoacyl-tRNA deacylase.